The chain runs to 341 residues: Glyceraldehyde-3-phosphate dehydrogenase (341 aa).

Residues 11–12 (TI) and Gly110 contribute to the NAD(+) site. 139 to 141 (SCN) provides a ligand contact to D-glyceraldehyde 3-phosphate. Cys140 acts as the Nucleophile in catalysis. Position 168 (Arg168) interacts with NAD(+). 194-195 (HG) contacts D-glyceraldehyde 3-phosphate. Gln302 is an NAD(+) binding site.

It belongs to the glyceraldehyde-3-phosphate dehydrogenase family. As to quaternary structure, homotetramer.

It is found in the cytoplasm. It carries out the reaction D-glyceraldehyde 3-phosphate + phosphate + NADP(+) = (2R)-3-phospho-glyceroyl phosphate + NADPH + H(+). The enzyme catalyses D-glyceraldehyde 3-phosphate + phosphate + NAD(+) = (2R)-3-phospho-glyceroyl phosphate + NADH + H(+). Its pathway is carbohydrate degradation; glycolysis; pyruvate from D-glyceraldehyde 3-phosphate: step 1/5. This Methanoculleus marisnigri (strain ATCC 35101 / DSM 1498 / JR1) protein is Glyceraldehyde-3-phosphate dehydrogenase.